The chain runs to 95 residues: Co-chaperonin GroES (95 aa).

The protein belongs to the GroES chaperonin family. In terms of assembly, heptamer of 7 subunits arranged in a ring. Interacts with the chaperonin GroEL.

It localises to the cytoplasm. Functionally, together with the chaperonin GroEL, plays an essential role in assisting protein folding. The GroEL-GroES system forms a nano-cage that allows encapsulation of the non-native substrate proteins and provides a physical environment optimized to promote and accelerate protein folding. GroES binds to the apical surface of the GroEL ring, thereby capping the opening of the GroEL channel. The sequence is that of Co-chaperonin GroES from Lachnoclostridium phytofermentans (strain ATCC 700394 / DSM 18823 / ISDg) (Clostridium phytofermentans).